Reading from the N-terminus, the 459-residue chain is Ribulose bisphosphate carboxylase/oxygenase activase, chloroplastic (459 aa).

164-171 (GGKGQGKS) is a binding site for ATP.

The protein belongs to the RuBisCO activase family.

It is found in the plastid. The protein resides in the chloroplast stroma. Functionally, activation of RuBisCO (ribulose-1,5-bisphosphate carboxylase/oxygenase; EC 4.1.1.39) involves the ATP-dependent carboxylation of the epsilon-amino group of lysine leading to a carbamate structure. The chain is Ribulose bisphosphate carboxylase/oxygenase activase, chloroplastic from Solanum pennellii (Tomato).